The primary structure comprises 166 residues: Large ribosomal subunit protein uL10 (166 aa).

Belongs to the universal ribosomal protein uL10 family. In terms of assembly, part of the ribosomal stalk of the 50S ribosomal subunit. The N-terminus interacts with L11 and the large rRNA to form the base of the stalk. The C-terminus forms an elongated spine to which L12 dimers bind in a sequential fashion forming a multimeric L10(L12)X complex.

In terms of biological role, forms part of the ribosomal stalk, playing a central role in the interaction of the ribosome with GTP-bound translation factors. This is Large ribosomal subunit protein uL10 from Marinomonas sp. (strain MWYL1).